A 178-amino-acid chain; its full sequence is Deoxycytidylate deaminase (178 aa).

The 133-residue stretch at 14 to 146 (EWPEYFMAVA…EATAARLLFD (133 aa)) folds into the CMP/dCMP-type deaminase domain. H84 contributes to the Zn(2+) binding site. The Proton donor role is filled by E86. The Zn(2+) site is built by C110 and C113. S174 is subject to Phosphoserine.

The protein belongs to the cytidine and deoxycytidylate deaminase family. As to quaternary structure, homohexamer. It depends on Zn(2+) as a cofactor.

It carries out the reaction dCMP + H2O + H(+) = dUMP + NH4(+). The catalysed reaction is 5-hydroxymethyl-dCMP + H2O + H(+) = 5-hydroxymethyl-dUMP + NH4(+). Allosteric enzyme whose activity is greatly influenced by the end products of its metabolic pathway, dCTP and dTTP. Catalyzes the deamination of dCMP to dUMP, providing the nucleoside monophosphate substrate for the thymidylate synthase/TYMS. Also, part of a nucleotide salvage pathway that eliminates epigenetically modified 5-hydroxymethyl-dCMP (hmdCMP) in a two-step process entailing deamination to cytotoxic 5-hydroxymethyl-dUMP (hmdUMP), followed by its hydrolysis into 5-hydroxymethyluracil (hmU) and 2-deoxy-D-ribose 5-phosphate (deoxyribosephosphate). Catalyzes the first step in that pathway, the deamination of 5-hydroxymethyl-dCMP (hmdCMP). The chain is Deoxycytidylate deaminase from Pongo abelii (Sumatran orangutan).